The chain runs to 174 residues: UPF0340 protein SH0921 (174 aa).

It belongs to the UPF0340 family.

The polypeptide is UPF0340 protein SH0921 (Staphylococcus haemolyticus (strain JCSC1435)).